We begin with the raw amino-acid sequence, 448 residues long: Probable ribonuclease FAU-1 (448 aa).

The disordered stretch occupies residues 426–448; it reads EAPGGKICTSEGLTSALPQSSSA. The segment covering 436–448 has biased composition (polar residues); that stretch reads EGLTSALPQSSSA.

The protein belongs to the FAU-1 family.

Functionally, probable RNase involved in rRNA stability through maturation and/or degradation of precursor rRNAs. Binds to RNA in loop regions with AU-rich sequences. The chain is Probable ribonuclease FAU-1 from Pyrobaculum islandicum (strain DSM 4184 / JCM 9189 / GEO3).